We begin with the raw amino-acid sequence, 219 residues long: Glutathione S-transferase F13 (219 aa).

In terms of domain architecture, GST N-terminal spans 2 to 82 (AMKLYGDEMS…YIAEKHRDKG (81 aa)). Glutathione is bound by residues 11–12 (SA), 40–41 (HK), 53–54 (KV), and 66–67 (ES). The region spanning 90 to 217 (DPKEAAIVKL…VSPGLTVAPT (128 aa)) is the GST C-terminal domain.

The protein belongs to the GST superfamily. Phi family.

It is found in the cytoplasm. It localises to the cytosol. The enzyme catalyses RX + glutathione = an S-substituted glutathione + a halide anion + H(+). May be involved in the conjugation of reduced glutathione to a wide number of exogenous and endogenous hydrophobic electrophiles and have a detoxification role against certain herbicides. This Arabidopsis thaliana (Mouse-ear cress) protein is Glutathione S-transferase F13 (GSTF13).